Here is a 374-residue protein sequence, read N- to C-terminus: N-acetyldiaminopimelate deacetylase (374 aa).

Asp69 is a catalytic residue. Catalysis depends on Glu128, which acts as the Proton acceptor.

It belongs to the peptidase M20A family. N-acetyldiaminopimelate deacetylase subfamily.

It catalyses the reaction N-acetyl-(2S,6S)-2,6-diaminopimelate + H2O = (2S,6S)-2,6-diaminopimelate + acetate. Its pathway is amino-acid biosynthesis; L-lysine biosynthesis via DAP pathway; LL-2,6-diaminopimelate from (S)-tetrahydrodipicolinate (acetylase route): step 3/3. Catalyzes the conversion of N-acetyl-diaminopimelate to diaminopimelate and acetate. In Bacillus licheniformis (strain ATCC 14580 / DSM 13 / JCM 2505 / CCUG 7422 / NBRC 12200 / NCIMB 9375 / NCTC 10341 / NRRL NRS-1264 / Gibson 46), this protein is N-acetyldiaminopimelate deacetylase.